The primary structure comprises 491 residues: Glucose-6-phosphate exchanger SLC37A2 (491 aa).

A helical transmembrane segment spans residues 5–25; the sequence is LAPGIWYRAFILLITFLIYTC. 3 N-linked (GlcNAc...) asparagine glycosylation sites follow: Asn-43, Asn-52, and Asn-58. 5 consecutive transmembrane segments (helical) span residues 78-98, 108-130, 132-154, 169-189, and 200-220; these read GAVD…SGIF, LTAG…FWNI, VLWY…WPAV, LIMG…SLLA, and SFVV…FFLI. Residues 229–257 form a disordered region; that stretch reads SPPQHHGNPEESQDQPEDPANGPSCNKES. 6 consecutive transmembrane segments (helical) span residues 292–312, 328–348, 352–372, 377–397, 424–444, and 452–472; these read LCLL…PLYI, TLFD…SDYI, ATTC…YNHV, IGIS…PYAL, AIID…AGLI, and VFYM…RLVY.

Belongs to the major facilitator superfamily. Organophosphate:Pi antiporter (OPA) (TC 2.A.1.4) family.

It is found in the endoplasmic reticulum membrane. It carries out the reaction D-glucose 6-phosphate(in) + phosphate(out) = D-glucose 6-phosphate(out) + phosphate(in). Its activity is regulated as follows. Inhibited by vanadate but not by chlorogenic acid. Functionally, inorganic phosphate and glucose-6-phosphate antiporter. May transport cytoplasmic glucose-6-phosphate into the lumen of the endoplasmic reticulum and translocate inorganic phosphate into the opposite direction. Independent of a lumenal glucose-6-phosphatase. May not play a role in homeostatic regulation of blood glucose levels. The protein is Glucose-6-phosphate exchanger SLC37A2 of Bos taurus (Bovine).